Here is a 242-residue protein sequence, read N- to C-terminus: Caspase-14 (242 aa).

A propeptide spanning residues 1–5 is cleaved from the precursor; that stretch reads MSNPR. Catalysis depends on residues His-89 and Cys-132. The propeptide occupies 147–152; that stretch reads EIVMVI.

It belongs to the peptidase C14A family. As to quaternary structure, heterodimer of a large and a small subunit, both processed from the precursor; the mature active form is a p17/p10 dimer and the intermediate form a p20/p8 dimer. In terms of processing, maturation by proteolytic processing appears to be a two-step process. The precursor is processed by KLK7 to yield the p20/p8 intermediate form which acts on the precursor to yield the p17/p10 mature form. Initially, cleavage between Ile-152 and Lys-153 has been proposed to yield the large and small subunits of the active enzyme. As to expression, expressed in keratinocytes of adult skin suprabasal layers (from spinous layers to the stratum granulosum and stratum corneum) (at protein level). Expressed in keratinocytes of hair shaft and sebaceous glands (at protein level). In psoriatic skin only expressed at very low levels. The p17/10 mature form is expressed in epidermis stratum corneum, the p20/p8 intermediate form in epidermis upper granular cells of the stratum granulosum.

It is found in the cytoplasm. The protein localises to the nucleus. Inhibited by caspase-1 inhibitor YVAD-FMK and the pan-caspase inhibitor VAD-FMK. Its function is as follows. Non-apoptotic caspase involved in epidermal differentiation. Is the predominant caspase in epidermal stratum corneum. Seems to play a role in keratinocyte differentiation and is required for cornification. Regulates maturation of the epidermis by proteolytically processing filaggrin. In vitro has a preference for the substrate [WY]-X-X-D motif and is active on the synthetic caspase substrate WEHD-ACF. Involved in processing of prosaposin in the epidermis. May be involved in retinal pigment epithelium cell barrier function. Involved in DNA degradation in differentiated keratinocytes probably by cleaving DFFA/ICAD leading to liberation of DFFB/CAD. In Homo sapiens (Human), this protein is Caspase-14 (CASP14).